The following is a 740-amino-acid chain: Elongation factor 2 (740 aa).

The tr-type G domain occupies 23 to 264 (AQIRNAGTLA…MIIEHVPPPN (242 aa)). GTP-binding positions include 32–39 (AHVDHGKT), 98–102 (DTPGH), and 152–155 (NKID). H605 is modified (diphthamide).

The protein belongs to the TRAFAC class translation factor GTPase superfamily. Classic translation factor GTPase family. EF-G/EF-2 subfamily.

It is found in the cytoplasm. Catalyzes the GTP-dependent ribosomal translocation step during translation elongation. During this step, the ribosome changes from the pre-translocational (PRE) to the post-translocational (POST) state as the newly formed A-site-bound peptidyl-tRNA and P-site-bound deacylated tRNA move to the P and E sites, respectively. Catalyzes the coordinated movement of the two tRNA molecules, the mRNA and conformational changes in the ribosome. This Pyrobaculum arsenaticum (strain DSM 13514 / JCM 11321 / PZ6) protein is Elongation factor 2.